Here is a 159-residue protein sequence, read N- to C-terminus: 3-hydroxyacyl-[acyl-carrier-protein] dehydratase FabZ (159 aa).

The active site involves histidine 58.

The protein belongs to the thioester dehydratase family. FabZ subfamily.

It localises to the cytoplasm. It carries out the reaction a (3R)-hydroxyacyl-[ACP] = a (2E)-enoyl-[ACP] + H2O. In terms of biological role, involved in unsaturated fatty acids biosynthesis. Catalyzes the dehydration of short chain beta-hydroxyacyl-ACPs and long chain saturated and unsaturated beta-hydroxyacyl-ACPs. This Helicobacter pylori (strain HPAG1) protein is 3-hydroxyacyl-[acyl-carrier-protein] dehydratase FabZ.